Consider the following 353-residue polypeptide: Interferon-stimulated 20 kDa exonuclease-like 2 (353 aa).

Disordered stretches follow at residues 1–93 and 125–172; these read MSTL…QPLD and ALPK…SGAS. A compositionally biased stretch (basic and acidic residues) spans 14–23; it reads PPKKALEGNA. Positions 24–35 are enriched in basic residues; sequence KHRNFVKKRRLL. A compositionally biased stretch (basic and acidic residues) spans 54–63; the sequence is LHSEPSKKGE. Basic residues predominate over residues 135–151; sequence RSQKKSSQKKSSKKNHP. Residues 152-172 are compositionally biased toward polar residues; the sequence is QKNAPQNSTQAHSENKCSGAS. The region spanning 178 to 353 is the Exonuclease domain; sequence KMVAIDCEMV…EHLARNPPTD (176 aa).

It is found in the nucleus. It localises to the nucleolus. Functionally, 3'-&gt; 5'-exoribonuclease involved in ribosome biogenesis in the processing of the 12S pre-rRNA. Displays a strong specificity for a 3'-end containing a free hydroxyl group. The polypeptide is Interferon-stimulated 20 kDa exonuclease-like 2 (ISG20L2) (Homo sapiens (Human)).